We begin with the raw amino-acid sequence, 281 residues long: 2-dehydro-3-deoxyphosphooctonate aldolase (281 aa).

The protein belongs to the KdsA family.

Its subcellular location is the cytoplasm. It carries out the reaction D-arabinose 5-phosphate + phosphoenolpyruvate + H2O = 3-deoxy-alpha-D-manno-2-octulosonate-8-phosphate + phosphate. It participates in carbohydrate biosynthesis; 3-deoxy-D-manno-octulosonate biosynthesis; 3-deoxy-D-manno-octulosonate from D-ribulose 5-phosphate: step 2/3. Its pathway is bacterial outer membrane biogenesis; lipopolysaccharide biosynthesis. The polypeptide is 2-dehydro-3-deoxyphosphooctonate aldolase (Psychromonas ingrahamii (strain DSM 17664 / CCUG 51855 / 37)).